A 34-amino-acid polypeptide reads, in one-letter code: Cytochrome c oxidase polypeptide 2A (34 aa).

At Met1 the chain carries N-formylmethionine. Residues 4–34 form a helical membrane-spanning segment; the sequence is KPKGALAVILVLTLTILVFWLGVYAVFFARG.

The protein resides in the cell membrane. The catalysed reaction is 4 Fe(II)-[cytochrome c] + O2 + 8 H(+)(in) = 4 Fe(III)-[cytochrome c] + 2 H2O + 4 H(+)(out). The sequence is that of Cytochrome c oxidase polypeptide 2A (cbaD) from Thermus thermophilus (strain ATCC 27634 / DSM 579 / HB8).